The primary structure comprises 374 residues: Chaperone protein DnaJ (374 aa).

The J domain occupies 5–70 (DYYEVLGVAK…QKRAAYDRYG (66 aa)). The segment at 134 to 212 (GFDTEIRVPS…CDGVGRIRRN (79 aa)) adopts a CR-type zinc-finger fold. Zn(2+) is bound by residues Cys147, Cys150, Cys164, Cys167, Cys186, Cys189, Cys200, and Cys203. CXXCXGXG motif repeat units follow at residues 147-154 (CDTCHGSG), 164-171 (CRTCGGSG), 186-193 (CPTCHGTG), and 200-207 (CPSCDGVG).

It belongs to the DnaJ family. In terms of assembly, homodimer. Zn(2+) is required as a cofactor.

It is found in the cytoplasm. Functionally, participates actively in the response to hyperosmotic and heat shock by preventing the aggregation of stress-denatured proteins and by disaggregating proteins, also in an autonomous, DnaK-independent fashion. Unfolded proteins bind initially to DnaJ; upon interaction with the DnaJ-bound protein, DnaK hydrolyzes its bound ATP, resulting in the formation of a stable complex. GrpE releases ADP from DnaK; ATP binding to DnaK triggers the release of the substrate protein, thus completing the reaction cycle. Several rounds of ATP-dependent interactions between DnaJ, DnaK and GrpE are required for fully efficient folding. Also involved, together with DnaK and GrpE, in the DNA replication of plasmids through activation of initiation proteins. This is Chaperone protein DnaJ from Bordetella petrii (strain ATCC BAA-461 / DSM 12804 / CCUG 43448).